Reading from the N-terminus, the 361-residue chain is Dihydroorotate dehydrogenase (quinone) (361 aa).

Residues 69–73 (AGFDK) and T93 each bind FMN. Position 73 (K73) interacts with substrate. Position 118–122 (118–122 (NRLGF)) interacts with substrate. 2 residues coordinate FMN: N147 and N180. N180 provides a ligand contact to substrate. Catalysis depends on S183, which acts as the Nucleophile. N185 contributes to the substrate binding site. The FMN site is built by K221 and T249. Residue 250 to 251 (NT) participates in substrate binding. Residues G271, G300, and 321-322 (YT) each bind FMN.

The protein belongs to the dihydroorotate dehydrogenase family. Type 2 subfamily. In terms of assembly, monomer. FMN serves as cofactor.

The protein resides in the cell membrane. The enzyme catalyses (S)-dihydroorotate + a quinone = orotate + a quinol. It functions in the pathway pyrimidine metabolism; UMP biosynthesis via de novo pathway; orotate from (S)-dihydroorotate (quinone route): step 1/1. In terms of biological role, catalyzes the conversion of dihydroorotate to orotate with quinone as electron acceptor. This Roseiflexus sp. (strain RS-1) protein is Dihydroorotate dehydrogenase (quinone).